The sequence spans 445 residues: Phosphoglucosamine mutase (445 aa).

Catalysis depends on Ser102, which acts as the Phosphoserine intermediate. Mg(2+)-binding residues include Ser102, Asp241, Asp243, and Asp245. Position 102 is a phosphoserine (Ser102).

Belongs to the phosphohexose mutase family. Requires Mg(2+) as cofactor. Activated by phosphorylation.

The catalysed reaction is alpha-D-glucosamine 1-phosphate = D-glucosamine 6-phosphate. Its function is as follows. Catalyzes the conversion of glucosamine-6-phosphate to glucosamine-1-phosphate. The protein is Phosphoglucosamine mutase of Sodalis glossinidius (strain morsitans).